The following is a 259-amino-acid chain: Protein-L-isoaspartate O-methyltransferase (259 aa).

The segment at 1–25 is disordered; it reads MRKRVDPPAGGRLAPGITPANSNTR. The active site involves S107.

This sequence belongs to the methyltransferase superfamily. L-isoaspartyl/D-aspartyl protein methyltransferase family.

It localises to the cytoplasm. The catalysed reaction is [protein]-L-isoaspartate + S-adenosyl-L-methionine = [protein]-L-isoaspartate alpha-methyl ester + S-adenosyl-L-homocysteine. Catalyzes the methyl esterification of L-isoaspartyl residues in peptides and proteins that result from spontaneous decomposition of normal L-aspartyl and L-asparaginyl residues. It plays a role in the repair and/or degradation of damaged proteins. This chain is Protein-L-isoaspartate O-methyltransferase, found in Bordetella bronchiseptica (strain ATCC BAA-588 / NCTC 13252 / RB50) (Alcaligenes bronchisepticus).